A 467-amino-acid polypeptide reads, in one-letter code: Dimethylamine methyltransferase MtbB1 (467 aa).

Pyl-356 is a non-standard amino acid (pyrrolysine).

Belongs to the dimethylamine methyltransferase family.

The enzyme catalyses Co(I)-[dimethylamine-specific corrinoid protein] + dimethylamine + H(+) = methyl-Co(III)-[dimethylamine-specific corrinoid protein] + methylamine. The protein operates within one-carbon metabolism; methanogenesis from dimethylamine. Catalyzes the transfer of a methyl group from dimethylamine to the corrinoid cofactor of MtbC. The sequence is that of Dimethylamine methyltransferase MtbB1 (mtbB1) from Methanosarcina acetivorans (strain ATCC 35395 / DSM 2834 / JCM 12185 / C2A).